Consider the following 333-residue polypeptide: Olfactory receptor 9S13 (333 aa).

Residues 1 to 35 are Extracellular-facing; that stretch reads MATAVHRNGSLTPVSLRVFVLVGFGGGALTQALLF. Residue N8 is glycosylated (N-linked (GlcNAc...) asparagine). The chain crosses the membrane as a helical span at residues 36–56; it reads AVFLVLYVVTVLGNLTMIVVI. Topologically, residues 57–72 are cytoplasmic; it reads TLDARLHSPMYFFLKN. A helical membrane pass occupies residues 73–93; the sequence is LSFVDLCYSSAIAPNALANFL. Over 94–106 the chain is Extracellular; the sequence is STSKVISFEACAT. Residues C104 and C196 are joined by a disulfide bond. A helical membrane pass occupies residues 107-127; that stretch reads QFFFFSLLATTETFLLAVMAY. Residues 128-150 are Cytoplasmic-facing; that stretch reads DRFMAICSPLRYPVTMCPTTCTR. A helical transmembrane segment spans residues 151–171; that stretch reads LVLGTFCVGCLNSIVQTSLTF. Topologically, residues 172-203 are extracellular; the sequence is QLPFCSSNRIDHFYCDVPPLLQLACASTALNE. A helical transmembrane segment spans residues 204–224; that stretch reads LFLFGLCGFIIVSTTLAVLVS. Over 225–251 the chain is Cytoplasmic; that stretch reads YGYITVTILRMHSGSGRHKVFSTCGSH. The chain crosses the membrane as a helical span at residues 252-272; the sequence is LTAVSLFYGTLFVMYAQPGAL. Topologically, residues 273–278 are extracellular; that stretch reads TSMEQG. The chain crosses the membrane as a helical span at residues 279–299; the sequence is KVVSIFYTLVIPMLNPLIYSL. At 300 to 333 the chain is on the cytoplasmic side; that stretch reads RNKDVKDALQRLGQRHSLVKAVRGCPAAGGNASV.

Belongs to the G-protein coupled receptor 1 family.

It localises to the cell membrane. Odorant receptor. The sequence is that of Olfactory receptor 9S13 from Mus musculus (Mouse).